The chain runs to 193 residues: Protein CURVATURE THYLAKOID 1D, chloroplastic (193 aa).

Residues 1–51 (MELCTRSTTIITHLPASFNGHGYLAGKSVDRISLPLQRNVASLVLQSRTLR) constitute a chloroplast transit peptide. Residues 52 to 117 (CSRKFPGETV…NDIKLDSDKT (66 aa)) are Stromal-facing. The helical transmembrane segment at 118–138 (YSILLYGSGAIVALYLTSAIV) threads the bilayer. Over 139–142 (SSLE) the chain is Lumenal. The helical transmembrane segment at 143–163 (AIPLFPKLMEVVGLGYTLWFT) threads the bilayer. Topologically, residues 164-193 (TRYLLFKRNREELKTKVSEIKKQVLGSDSE) are stromal.

Belongs to the CURT family. Homo- and heterodimers and trimers.

Its subcellular location is the plastid. The protein resides in the chloroplast thylakoid membrane. In terms of biological role, determines thylakoid architecture by inducing membrane curvature. This Arabidopsis thaliana (Mouse-ear cress) protein is Protein CURVATURE THYLAKOID 1D, chloroplastic (CURT1D).